A 432-amino-acid polypeptide reads, in one-letter code: Adenylosuccinate synthetase (432 aa).

GTP contacts are provided by residues 13–19 (GDEGKGK) and 41–43 (GHT). The Proton acceptor role is filled by Asp-14. 2 residues coordinate Mg(2+): Asp-14 and Gly-41. IMP-binding positions include 14–17 (DEGK), 39–42 (NAGH), Thr-130, Arg-144, Gln-225, Thr-240, and Arg-304. His-42 (proton donor) is an active-site residue. Position 300 to 306 (300 to 306 (ATTGRKR)) interacts with substrate. Residues Arg-306, 332-334 (KLD), and 415-417 (STG) contribute to the GTP site.

Belongs to the adenylosuccinate synthetase family. As to quaternary structure, homodimer. Requires Mg(2+) as cofactor.

It is found in the cytoplasm. The enzyme catalyses IMP + L-aspartate + GTP = N(6)-(1,2-dicarboxyethyl)-AMP + GDP + phosphate + 2 H(+). It participates in purine metabolism; AMP biosynthesis via de novo pathway; AMP from IMP: step 1/2. In terms of biological role, plays an important role in the de novo pathway of purine nucleotide biosynthesis. Catalyzes the first committed step in the biosynthesis of AMP from IMP. The protein is Adenylosuccinate synthetase of Vibrio cholerae serotype O1 (strain ATCC 39541 / Classical Ogawa 395 / O395).